The sequence spans 470 residues: Chitin deacetylase 1 (470 aa).

Positions 1-19 (MFTFAAFSALLISLAGVVA) are cleaved as a signal peptide. 2 N-linked (GlcNAc...) asparagine glycosylation sites follow: N101 and N121. A disulfide bond links C155 and C363. A NodB homology domain is found at 159–358 (NVWGLSYDDG…VLANGTYQLK (200 aa)). The Proton acceptor role is filled by D166. D166 is an acetate binding site. Residues D167, H216, and H220 each coordinate Co(2+). Residue Y257 coordinates acetate. H331 acts as the Proton donor in catalysis. 3 N-linked (GlcNAc...) asparagine glycosylation sites follow: N352, N378, and N440. Residues 406-447 (EVSAPSEATGSTAAGSAASTTSGSGASASTGAASNTSSSGSG) are disordered. Over residues 408–447 (SAPSEATGSTAAGSAASTTSGSGASASTGAASNTSSSGSG) the composition is skewed to low complexity. The GPI-anchor amidated serine moiety is linked to residue S444. Residues 445 to 470 (GSGRSATMGGALIALAAVAVGMVYVA) constitute a propeptide, removed in mature form.

It belongs to the polysaccharide deacetylase family. Requires Co(2+) as cofactor.

It is found in the secreted. The protein localises to the cell wall. It localises to the cell membrane. It catalyses the reaction [(1-&gt;4)-N-acetyl-beta-D-glucosaminyl](n) + n H2O = chitosan + n acetate. In terms of biological role, hydrolyzes the N-acetamido groups of N-acetyl-D-glucosamine residues in chitin to form chitosan and acetate. Chitosan is required to anchor melanin to the cell wall, for maintenance of cell wall integrity, and for proper cytokinesis. Plays a major role in synthesizing cell wall chitosan during host infection; chitosan offers an advantage during infection as it is less readily detected than chitin by host immunosurveillance mechanisms. In Cryptococcus neoformans var. grubii serotype A (strain H99 / ATCC 208821 / CBS 10515 / FGSC 9487) (Filobasidiella neoformans var. grubii), this protein is Chitin deacetylase 1.